We begin with the raw amino-acid sequence, 148 residues long: Leghemoglobin 29 (148 aa).

The Globin domain occupies 2–148 (EFTLRQEALV…LAVAIMKEMS (147 aa)). Position 30 is a nitrated tyrosine (Tyr30). Heme b is bound at residue Ser45. Position 45 is a phosphoserine (Ser45). His63 is an O2 binding site. Heme b-binding residues include His95 and Lys98. Tyr136 carries the post-translational modification Nitrated tyrosine.

The protein belongs to the plant globin family. As to quaternary structure, monomer. In terms of processing, nitrated in effective nodules and particularly in hypoxic conditions; this mechanism may play a protective role in the symbiosis by buffering toxic peroxynitrite NO(2)(-). Nitration level decrease during nodule senescence. Phosphorylation at Ser-45 disrupts the molecular environment of its porphyrin ring oxygen binding pocket, thus leading to a reduced oxygen consumption and to the delivery of oxygen O(2) to symbiosomes. Accumulates in root nodules after inoculation by bacteria of the genus Rhizobium. Expressed in mycorrhizal roots in the presence of the mycorrhizal fungus Glomus fasciculatum.

The protein resides in the cytoplasm. It is found in the cytosol. Its subcellular location is the nucleus. In terms of biological role, leghemoglobin that reversibly binds oxygen O(2) through a pentacoordinated heme iron. In root nodules, facilitates the diffusion of oxygen to the bacteroids while preventing the bacterial nitrogenase from being inactivated by buffering dioxygen, nitric oxide and carbon monoxide, and promoting the formation of reactive oxygen species (ROS, e.g. H(2)O(2)). This role is essential for symbiotic nitrogen fixation (SNF). This is Leghemoglobin 29 from Vicia faba (Broad bean).